The sequence spans 214 residues: Ribonuclease HII (214 aa).

Residues 26 to 214 (EIVCGVDEAG…PVRAALDLIR (189 aa)) form the RNase H type-2 domain. A divalent metal cation-binding residues include Asp32, Glu33, and Asp124.

The protein belongs to the RNase HII family. Mn(2+) serves as cofactor. The cofactor is Mg(2+).

The protein resides in the cytoplasm. It carries out the reaction Endonucleolytic cleavage to 5'-phosphomonoester.. Its function is as follows. Endonuclease that specifically degrades the RNA of RNA-DNA hybrids. The sequence is that of Ribonuclease HII from Burkholderia orbicola (strain MC0-3).